Reading from the N-terminus, the 128-residue chain is Large ribosomal subunit protein bL12 (128 aa).

The protein belongs to the bacterial ribosomal protein bL12 family. Homodimer. Part of the ribosomal stalk of the 50S ribosomal subunit. Forms a multimeric L10(L12)X complex, where L10 forms an elongated spine to which 2 to 4 L12 dimers bind in a sequential fashion. Binds GTP-bound translation factors.

Its function is as follows. Forms part of the ribosomal stalk which helps the ribosome interact with GTP-bound translation factors. Is thus essential for accurate translation. This is Large ribosomal subunit protein bL12 from Corynebacterium aurimucosum (strain ATCC 700975 / DSM 44827 / CIP 107346 / CN-1) (Corynebacterium nigricans).